The sequence spans 337 residues: uncharacterized protein (337 aa).

29–36 (GPKSSGKS) is a binding site for ATP.

The protein belongs to the archaeal ATPase family.

This is an uncharacterized protein from Methanocaldococcus jannaschii (strain ATCC 43067 / DSM 2661 / JAL-1 / JCM 10045 / NBRC 100440) (Methanococcus jannaschii).